A 375-amino-acid polypeptide reads, in one-letter code: Transaldolase (375 aa).

The active-site Schiff-base intermediate with substrate is the Lys145.

The protein belongs to the transaldolase family. Type 2 subfamily.

It is found in the cytoplasm. It catalyses the reaction D-sedoheptulose 7-phosphate + D-glyceraldehyde 3-phosphate = D-erythrose 4-phosphate + beta-D-fructose 6-phosphate. Its pathway is carbohydrate degradation; pentose phosphate pathway; D-glyceraldehyde 3-phosphate and beta-D-fructose 6-phosphate from D-ribose 5-phosphate and D-xylulose 5-phosphate (non-oxidative stage): step 2/3. Its function is as follows. Transaldolase is important for the balance of metabolites in the pentose-phosphate pathway. The polypeptide is Transaldolase (Mycobacterium leprae (strain Br4923)).